The chain runs to 225 residues: Ribonuclease 3 (225 aa).

The 123-residue stretch at 5–127 (IEKLTRQLGY…IIGAVYLDSD (123 aa)) folds into the RNase III domain. E40 is a binding site for Mg(2+). D44 is a catalytic residue. The Mg(2+) site is built by D113 and E116. The active site involves E116. The 71-residue stretch at 154–224 (DPKTRLQEFL…AELALEQLTN (71 aa)) folds into the DRBM domain.

The protein belongs to the ribonuclease III family. As to quaternary structure, homodimer. Mg(2+) is required as a cofactor.

The protein localises to the cytoplasm. The enzyme catalyses Endonucleolytic cleavage to 5'-phosphomonoester.. In terms of biological role, digests double-stranded RNA. Involved in the processing of primary rRNA transcript to yield the immediate precursors to the large and small rRNAs (23S and 16S). Processes some mRNAs, and tRNAs when they are encoded in the rRNA operon. Processes pre-crRNA and tracrRNA of type II CRISPR loci if present in the organism. In Vibrio vulnificus (strain YJ016), this protein is Ribonuclease 3.